The sequence spans 388 residues: S-adenosylmethionine synthase (388 aa).

Residue histidine 16 coordinates ATP. A Mg(2+)-binding site is contributed by aspartate 18. Glutamate 44 lines the K(+) pocket. L-methionine is bound by residues glutamate 57 and glutamine 100. The segment at 100–110 is flexible loop; that stretch reads QSADIAQGVNE. ATP contacts are provided by residues 167–169, 233–234, aspartate 242, 248–249, alanine 265, and lysine 269; these read DAK, RF, and RK. Residue aspartate 242 coordinates L-methionine. Residue lysine 273 coordinates L-methionine.

The protein belongs to the AdoMet synthase family. Homotetramer; dimer of dimers. It depends on Mg(2+) as a cofactor. Requires K(+) as cofactor.

The protein localises to the cytoplasm. The catalysed reaction is L-methionine + ATP + H2O = S-adenosyl-L-methionine + phosphate + diphosphate. It functions in the pathway amino-acid biosynthesis; S-adenosyl-L-methionine biosynthesis; S-adenosyl-L-methionine from L-methionine: step 1/1. Its function is as follows. Catalyzes the formation of S-adenosylmethionine (AdoMet) from methionine and ATP. The overall synthetic reaction is composed of two sequential steps, AdoMet formation and the subsequent tripolyphosphate hydrolysis which occurs prior to release of AdoMet from the enzyme. The polypeptide is S-adenosylmethionine synthase (Aromatoleum aromaticum (strain DSM 19018 / LMG 30748 / EbN1) (Azoarcus sp. (strain EbN1))).